The primary structure comprises 342 residues: C-X-C chemokine receptor type 6 (342 aa).

The Extracellular portion of the chain corresponds to 1–32; sequence MAEHDYHEDYGFNSFNDSSQEEHQDFLQFSKV. N-linked (GlcNAc...) asparagine glycosylation is present at Asn16. The helical transmembrane segment at 33-59 threads the bilayer; that stretch reads FLPCMYLVVFVCGLVGNSLVLVISIFY. Topologically, residues 60–68 are cytoplasmic; sequence HKLQSLTDV. A helical membrane pass occupies residues 69–89; that stretch reads FLVNLPLADLVFVCTLPFWAY. The Extracellular segment spans residues 90–103; the sequence is AGIHEWVFGQVMCK. Cys102 and Cys180 are disulfide-bonded. The chain crosses the membrane as a helical span at residues 104 to 125; it reads SLLGIYTINFYTSMLILTCITV. The Cytoplasmic segment spans residues 126–143; sequence DRFIVVVKATKAYNQQAK. Residues 144–164 traverse the membrane as a helical segment; that stretch reads RMTWGKVTSLLIWVISLLVSL. Residues 165 to 187 are Extracellular-facing; the sequence is PQIIYGNVFNLDKLICGYHDEAI. The chain crosses the membrane as a helical span at residues 188–215; that stretch reads STVVLATQMTLGFFLPLLTMIVCYSVII. The Cytoplasmic portion of the chain corresponds to 216–231; that stretch reads KTLLHAGGFQKHRSLK. The helical transmembrane segment at 232-259 threads the bilayer; it reads IIFLVMAVFLLTQMPFNLMKLIRSTHWE. At 260-275 the chain is on the extracellular side; that stretch reads YYAMTSFHYTIMVTEA. A helical transmembrane segment spans residues 276 to 293; that stretch reads IAYLRACLNPVLYAFVSL. Residues 294–342 lie on the Cytoplasmic side of the membrane; the sequence is KFRKNFWKLVKDIGCLPYLGVSHQWKSSEDNSKTFSASHNVEATSMFQL.

Belongs to the G-protein coupled receptor 1 family.

The protein resides in the cell membrane. Receptor for the C-X-C chemokine CXCL16. Used as a coreceptor by SIVs and by strains of HIV-2 and m-tropic HIV-1. The polypeptide is C-X-C chemokine receptor type 6 (CXCR6) (Pan troglodytes (Chimpanzee)).